We begin with the raw amino-acid sequence, 284 residues long: Bifunctional protein FolD (284 aa).

NADP(+) is bound by residues 165–167, threonine 192, and valine 233; that span reads GRG.

Belongs to the tetrahydrofolate dehydrogenase/cyclohydrolase family. In terms of assembly, homodimer.

The enzyme catalyses (6R)-5,10-methylene-5,6,7,8-tetrahydrofolate + NADP(+) = (6R)-5,10-methenyltetrahydrofolate + NADPH. It carries out the reaction (6R)-5,10-methenyltetrahydrofolate + H2O = (6R)-10-formyltetrahydrofolate + H(+). It participates in one-carbon metabolism; tetrahydrofolate interconversion. Its function is as follows. Catalyzes the oxidation of 5,10-methylenetetrahydrofolate to 5,10-methenyltetrahydrofolate and then the hydrolysis of 5,10-methenyltetrahydrofolate to 10-formyltetrahydrofolate. The protein is Bifunctional protein FolD of Corynebacterium glutamicum (strain R).